The sequence spans 154 residues: 6,7-dimethyl-8-ribityllumazine synthase (154 aa).

5-amino-6-(D-ribitylamino)uracil contacts are provided by residues phenylalanine 22, 56–58 (AFE), and 80–82 (AVI). 85–86 (AT) contributes to the (2S)-2-hydroxy-3-oxobutyl phosphate binding site. Histidine 88 serves as the catalytic Proton donor. Phenylalanine 113 contributes to the 5-amino-6-(D-ribitylamino)uracil binding site. Arginine 127 contacts (2S)-2-hydroxy-3-oxobutyl phosphate.

It belongs to the DMRL synthase family.

The enzyme catalyses (2S)-2-hydroxy-3-oxobutyl phosphate + 5-amino-6-(D-ribitylamino)uracil = 6,7-dimethyl-8-(1-D-ribityl)lumazine + phosphate + 2 H2O + H(+). The protein operates within cofactor biosynthesis; riboflavin biosynthesis; riboflavin from 2-hydroxy-3-oxobutyl phosphate and 5-amino-6-(D-ribitylamino)uracil: step 1/2. Functionally, catalyzes the formation of 6,7-dimethyl-8-ribityllumazine by condensation of 5-amino-6-(D-ribitylamino)uracil with 3,4-dihydroxy-2-butanone 4-phosphate. This is the penultimate step in the biosynthesis of riboflavin. This is 6,7-dimethyl-8-ribityllumazine synthase from Clostridium botulinum (strain ATCC 19397 / Type A).